The primary structure comprises 293 residues: 4-hydroxy-tetrahydrodipicolinate synthase (293 aa).

Thr47 is a pyruvate binding site. The active-site Proton donor/acceptor is Tyr135. Residue Lys164 is the Schiff-base intermediate with substrate of the active site. Residue Ile205 coordinates pyruvate.

It belongs to the DapA family. In terms of assembly, homotetramer; dimer of dimers.

The protein resides in the cytoplasm. The enzyme catalyses L-aspartate 4-semialdehyde + pyruvate = (2S,4S)-4-hydroxy-2,3,4,5-tetrahydrodipicolinate + H2O + H(+). It participates in amino-acid biosynthesis; L-lysine biosynthesis via DAP pathway; (S)-tetrahydrodipicolinate from L-aspartate: step 3/4. In terms of biological role, catalyzes the condensation of (S)-aspartate-beta-semialdehyde [(S)-ASA] and pyruvate to 4-hydroxy-tetrahydrodipicolinate (HTPA). This Symbiobacterium thermophilum (strain DSM 24528 / JCM 14929 / IAM 14863 / T) protein is 4-hydroxy-tetrahydrodipicolinate synthase.